A 356-amino-acid chain; its full sequence is Cobalt-precorrin-5B C(1)-methyltransferase (356 aa).

This sequence belongs to the CbiD family.

It catalyses the reaction Co-precorrin-5B + S-adenosyl-L-methionine = Co-precorrin-6A + S-adenosyl-L-homocysteine. It participates in cofactor biosynthesis; adenosylcobalamin biosynthesis; cob(II)yrinate a,c-diamide from sirohydrochlorin (anaerobic route): step 6/10. Functionally, catalyzes the methylation of C-1 in cobalt-precorrin-5B to form cobalt-precorrin-6A. This chain is Cobalt-precorrin-5B C(1)-methyltransferase, found in Citrifermentans bemidjiense (strain ATCC BAA-1014 / DSM 16622 / JCM 12645 / Bem) (Geobacter bemidjiensis).